The sequence spans 324 residues: Putative F-box/kelch-repeat protein At5g28160 (324 aa).

The region spanning 7 to 54 (RPSFLSLPDEIILSCLARISRSYYPKLSLVCKTFRTLLISNELIVARL) is the F-box domain. Residues 170–216 (KIYVMGGCMADESVNWGEVFDIKTQTWEALPDPGPEFRFSSIRKIDV) form a Kelch repeat.

In Arabidopsis thaliana (Mouse-ear cress), this protein is Putative F-box/kelch-repeat protein At5g28160.